Reading from the N-terminus, the 473-residue chain is High-affinity proline transporter PutP (473 aa).

The next 12 membrane-spanning stretches (helical) occupy residues 32–52 (LSAGAADMSGWLLMGLPGAMF), 56–76 (LSGAWIVIGLCLGAWANWLYV), 114–134 (IVILVFFTFYVSSGMVSGGVL), 146–166 (GLWIVTGVVVAYTLFGGFLAV), 171–191 (FVQGIIMFAALILVPIVTFFH), 218–238 (VLGIISLFAWGLGYFGQPHII), 256–276 (IGMGWMILSAVGAVLTGLGGI), 299–319 (ILFHPIITGFLISAILAAIMS), 350–370 (LVFLGRLAVLAVSIVALVLAW), 376–396 (ILGLVSYAWAGFGASFGPVVL), 408–428 (GALAGMIVGAATVIIWANAGL), and 431–451 (FLYEMIPGFAASLLSVFFVSI).

The protein belongs to the sodium:solute symporter (SSF) (TC 2.A.21) family.

The protein resides in the cell membrane. The catalysed reaction is L-proline(in) + Na(+)(in) = L-proline(out) + Na(+)(out). Functionally, catalyzes the high-affinity uptake of extracellular proline. Important for the use of proline as a sole carbon and energy source or a sole nitrogen source. In Bacillus subtilis (strain 168), this protein is High-affinity proline transporter PutP.